A 363-amino-acid chain; its full sequence is NAD kinase 1 (363 aa).

The active-site Proton acceptor is the aspartate 68. NAD(+)-binding positions include 68–69 (DG), arginine 73, 175–176 (ND), arginine 186, aspartate 205, alanine 240, and glutamine 275.

It belongs to the NAD kinase family. A divalent metal cation is required as a cofactor.

Its subcellular location is the cytoplasm. The enzyme catalyses NAD(+) + ATP = ADP + NADP(+) + H(+). In terms of biological role, involved in the regulation of the intracellular balance of NAD and NADP, and is a key enzyme in the biosynthesis of NADP. Catalyzes specifically the phosphorylation on 2'-hydroxyl of the adenosine moiety of NAD to yield NADP. The protein is NAD kinase 1 of Streptomyces coelicolor (strain ATCC BAA-471 / A3(2) / M145).